We begin with the raw amino-acid sequence, 215 residues long: Keratin-associated protein 26-1 (215 aa).

The protein belongs to the PMG family. Interacts with hair keratins.

Its function is as follows. In the hair cortex, hair keratin intermediate filaments are embedded in an interfilamentous matrix, consisting of hair keratin-associated proteins (KRTAP), which are essential for the formation of a rigid and resistant hair shaft through their extensive disulfide bond cross-linking with abundant cysteine residues of hair keratins. The matrix proteins include the high-sulfur and high-glycine-tyrosine keratins. The chain is Keratin-associated protein 26-1 from Mus musculus (Mouse).